A 792-amino-acid chain; its full sequence is Zinc finger CCCH domain-containing protein 11A (792 aa).

3 C3H1-type zinc fingers span residues 2-29 (PNQG…HCEA), 31-57 (LGNE…HMEI), and 60-87 (KRSE…HTRS). Disordered regions lie at residues 103-191 (PTVP…VHNG), 223-331 (KKMK…KAGE), and 345-443 (ASQK…RSMQ). Position 108 is a phosphoserine (Ser-108). Residues Lys-114 and Lys-124 each participate in a glycyl lysine isopeptide (Lys-Gly) (interchain with G-Cter in SUMO2) cross-link. Positions 115–135 (TSQLTVQQSKLSVQSNPSPQL) are enriched in polar residues. Residue Ser-132 is modified to Phosphoserine. Lys-140 is covalently cross-linked (Glycyl lysine isopeptide (Lys-Gly) (interchain with G-Cter in SUMO2)). Residues Ser-149, Ser-171, and Ser-289 each carry the phosphoserine modification. The segment covering 160–175 (ADDDEDDDDQFSEEGD) has biased composition (acidic residues). 2 stretches are compositionally biased toward basic and acidic residues: residues 308 to 331 (KKVE…KAGE) and 345 to 360 (ASQK…KAEE). Positions 338 to 360 (EEILLERASQKRGELQTKLKAEE) form a coiled coil. Residue Ser-346 is modified to Phosphoserine. A compositionally biased stretch (low complexity) spans 367 to 376 (SPSGTKSSSS). 2 stretches are compositionally biased toward basic and acidic residues: residues 393–405 (QQEM…KKDT) and 431–443 (QPEE…RSMQ). Lys-454 is covalently cross-linked (Glycyl lysine isopeptide (Lys-Gly) (interchain with G-Cter in SUMO2)). 2 disordered regions span residues 458–531 (ALRV…PTKL) and 545–571 (QRLQ…ASSY). The segment covering 461–473 (VQQSSESSGNSRP) has biased composition (polar residues). Basic and acidic residues-rich tracts occupy residues 492-501 (GVKEEKKCGL) and 545-558 (QRLQ…KEKA). Residue Lys-601 forms a Glycyl lysine isopeptide (Lys-Gly) (interchain with G-Cter in SUMO2) linkage. The disordered stretch occupies residues 690 to 750 (LSEDKPVTMS…SASTGKPPLS (61 aa)). Residues 698–715 (MSETENPKDSSVLSSAQA) are compositionally biased toward polar residues. Over residues 717-730 (SEPLLPEGSGPSSS) the composition is skewed to low complexity.

In terms of assembly, interacts with TREX complex components THOC2, DDX39 and POLDIP3; the interactions are ATP-dependent. Interacts with PABPN1; this interaction retains ZC3H11A in nuclear speckles. Interacts with KPNA3.

It is found in the nucleus speckle. Functionally, through its association with TREX complex components, may participate in the export and post-transcriptional coordination of selected mRNA transcripts, including those required to maintain the metabolic processes in embryonic cells. Binds RNA. The chain is Zinc finger CCCH domain-containing protein 11A (Zc3h11a) from Mus musculus (Mouse).